The following is a 38-amino-acid chain: Potassium channel toxin alpha-KTx 3.17 (38 aa).

Cystine bridges form between C8/C28, C14/C33, and C18/C35.

Belongs to the short scorpion toxin superfamily. Potassium channel inhibitor family. Alpha-KTx 03 subfamily. In terms of tissue distribution, expressed by the venom gland.

It localises to the secreted. In terms of biological role, completely inhibits the (125)I-kaliotoxin binding on rat brain synaptosomes with high-affinity (IC(50)=0.1 nM). Is a potent Kv1.3/KCNA3 ligand. The protein is Potassium channel toxin alpha-KTx 3.17 of Buthus paris (Scorpion).